The sequence spans 111 residues: MICOS complex subunit MIC13 (111 aa).

Residues 8 to 26 form a helical membrane-spanning segment; that stretch reads VVKFATKVTIAGGALYVAY.

This sequence belongs to the MICOS complex subunit Mic13 family. As to quaternary structure, component of the mitochondrial contact site and cristae organizing system (MICOS) complex.

The protein resides in the mitochondrion inner membrane. In terms of biological role, component of the MICOS complex, a large protein complex of the mitochondrial inner membrane that plays crucial roles in the maintenance of crista junctions, inner membrane architecture, and formation of contact sites to the outer membrane. Constituent of mature MICOS complex, it is required for the formation of cristae junction (CJ) and maintenance of cristae morphology. Required for the incorporation of MIC10 into the MICOS complex. The chain is MICOS complex subunit MIC13 from Danio rerio (Zebrafish).